A 355-amino-acid polypeptide reads, in one-letter code: Gibberellin 3-beta-dioxygenase 4 (355 aa).

The Fe2OG dioxygenase domain occupies 203-303 (GRGAIRLNHY…RISIAYLWGG (101 aa)). Fe cation-binding residues include His-227, Asp-229, and His-284. Residue Arg-294 is part of the active site.

It belongs to the iron/ascorbate-dependent oxidoreductase family. GA3OX subfamily. It depends on L-ascorbate as a cofactor. The cofactor is Fe cation. Expressed in siliques and in seeds, specifically at the rim of the embryo and the outer integument. Also expressed in flowers. Not detected in roots, stems and leaves.

It carries out the reaction gibberellin A20 + 2-oxoglutarate + O2 = gibberellin A1 + succinate + CO2. Its pathway is plant hormone biosynthesis; gibberellin biosynthesis. Converts the inactive gibberellin (GA) precursors GA9 and GA20 in the bioactives gibberellins GA4 and GA1. Involved in the production of bioactive GA for reproductive development. This Arabidopsis thaliana (Mouse-ear cress) protein is Gibberellin 3-beta-dioxygenase 4.